A 119-amino-acid chain; its full sequence is MKKKHRIKKNDEFQTVFQKGKSNANRQFVVYQLDKEEQPNFRIGLSVSKKIGNAVVRNRIKRMIRQSITELKDEIDSGKDFVIIARKPCAEMTYEELKKSLIHVFKRSGMKRIKSSVRK.

It belongs to the RnpA family. In terms of assembly, consists of a catalytic RNA component (M1 or rnpB) and a protein subunit.

It catalyses the reaction Endonucleolytic cleavage of RNA, removing 5'-extranucleotides from tRNA precursor.. RNaseP catalyzes the removal of the 5'-leader sequence from pre-tRNA to produce the mature 5'-terminus. It can also cleave other RNA substrates such as 4.5S RNA. The protein component plays an auxiliary but essential role in vivo by binding to the 5'-leader sequence and broadening the substrate specificity of the ribozyme. The sequence is that of Ribonuclease P protein component from Bacillus cereus (strain ZK / E33L).